Consider the following 307-residue polypeptide: Reaction center protein M chain (307 aa).

A run of 3 helical transmembrane segments spans residues 52–78 (LGIAGTVSLAFGAAWFFTIGVWYWYQA), 110–139 (QGGVWQIASLFMAISVIAWWVRVYTRADQL), and 142–167 (GKHMAWAFLSAIWLWSVLGFWRPILM). (7R,8Z)-bacteriochlorophyll b is bound by residues His181 and His201. A helical membrane pass occupies residues 197-225 (YNPFHGLSIAALYGSALLFAMHGATILAV). Fe cation is bound by residues His218 and Glu233. Trp251 lines the a ubiquinone pocket. A helical transmembrane segment spans residues 259-285 (ATMEGIHRWAIWMAVMVTLTGGIGILL). His265 lines the Fe cation pocket.

This sequence belongs to the reaction center PufL/M/PsbA/D family. As to quaternary structure, reaction center is composed of four bacteriochlorophylls, two bacteriopheophytins, two ubiquinones, one iron, and three highly hydrophobic polypeptide chains (designated L, M, and H).

The protein localises to the cellular chromatophore membrane. In terms of biological role, the reaction center is a membrane-bound complex that mediates the initial photochemical event in the electron transfer process of photosynthesis. The protein is Reaction center protein M chain (pufM) of Rhodobacter capsulatus (Rhodopseudomonas capsulata).